The primary structure comprises 106 residues: uncharacterized protein (106 aa).

This is an uncharacterized protein from Invertebrate iridescent virus 3 (IIV-3).